The sequence spans 562 residues: F-box only protein 33 (562 aa).

One can recognise an F-box domain in the interval 68–114 (AAGAASLPSELIVHIFSFLPAPDRLRASASCSHWRECLFYPALWPQL). Residues 155-173 (GGGPGDGGSGGGTDTGTGG) show a composition bias toward gly residues. The interval 155–176 (GGGPGDGGSGGGTDTGTGGEDG) is disordered.

As to quaternary structure, part of the SCF (SKP1-CUL1-F-box) E3 ubiquitin-protein ligase complex SCF(FBXO33) formed of CUL1, SKP1, RBX1 and FBXO33. Interacts via its N-terminus with YBX1 CSD domain. Directly interacts with SKP1 and CUL1.

It participates in protein modification; protein ubiquitination. Substrate recognition component of a SCF (SKP1-CUL1-F-box protein) E3 ubiquitin-protein ligase complex which mediates the ubiquitination and subsequent proteasomal degradation of target proteins. Probably recognizes and binds to phosphorylated target proteins. Recognizes YBX1. The sequence is that of F-box only protein 33 (Fbxo33) from Mus musculus (Mouse).